The following is a 303-amino-acid chain: Ferrochelatase (303 aa).

Residues H185 and E262 each contribute to the Fe cation site.

Belongs to the ferrochelatase family.

Its subcellular location is the cytoplasm. The enzyme catalyses heme b + 2 H(+) = protoporphyrin IX + Fe(2+). It participates in porphyrin-containing compound metabolism; protoheme biosynthesis; protoheme from protoporphyrin-IX: step 1/1. Functionally, catalyzes the ferrous insertion into protoporphyrin IX. The polypeptide is Ferrochelatase (Campylobacter jejuni (strain RM1221)).